The following is a 367-amino-acid chain: Cyclin-D3-2 (367 aa).

The span at 324 to 335 (STTASVSSSSSS) shows a compositional bias: low complexity. Residues 324 to 347 (STTASVSSSSSSPEPLLKRRRVQE) are disordered.

It belongs to the cyclin family. Cyclin D subfamily. Interacts with CDKA-1. In terms of tissue distribution, expressed in developing vegetative and floral primordia.

Functionally, promotes divisions in the guard cells (GCs) after the guard mother cells (GMC) symmetric division when in the presence of CDKA-1. The polypeptide is Cyclin-D3-2 (CYCD3-2) (Arabidopsis thaliana (Mouse-ear cress)).